Reading from the N-terminus, the 277-residue chain is Undecaprenyl-diphosphatase (277 aa).

The next 6 membrane-spanning stretches (helical) occupy residues 47-67 (FNIIIQLAAILAVVWEFRGKI), 85-105 (ANLLIAFFPAVVLGVLFADLI), 108-128 (WLFNPITVALALVVGGVVMLW), 187-207 (FSFFLAMPTMVGAAVYSGYVY), 218-238 (VFAVGFVTSFVFAMLAVRALL), and 249-269 (FAWYRIAFGLLILATWQFHLI).

The protein belongs to the UppP family.

The protein resides in the cell inner membrane. The enzyme catalyses di-trans,octa-cis-undecaprenyl diphosphate + H2O = di-trans,octa-cis-undecaprenyl phosphate + phosphate + H(+). Its function is as follows. Catalyzes the dephosphorylation of undecaprenyl diphosphate (UPP). Confers resistance to bacitracin. The polypeptide is Undecaprenyl-diphosphatase (Pseudomonas aeruginosa (strain ATCC 15692 / DSM 22644 / CIP 104116 / JCM 14847 / LMG 12228 / 1C / PRS 101 / PAO1)).